Consider the following 110-residue polypeptide: UPF0122 protein SaurJH9_1295 (110 aa).

The protein belongs to the UPF0122 family.

In terms of biological role, might take part in the signal recognition particle (SRP) pathway. This is inferred from the conservation of its genetic proximity to ftsY/ffh. May be a regulatory protein. The chain is UPF0122 protein SaurJH9_1295 from Staphylococcus aureus (strain JH9).